The primary structure comprises 382 residues: 1-deoxy-D-xylulose 5-phosphate reductoisomerase (382 aa).

Residues threonine 10, glycine 11, serine 12, isoleucine 13, glycine 36, lysine 37, asparagine 38, and asparagine 121 each contribute to the NADPH site. Lysine 122 lines the 1-deoxy-D-xylulose 5-phosphate pocket. NADPH is bound at residue glutamate 123. Residue aspartate 147 coordinates Mn(2+). Residues serine 148, glutamate 149, serine 173, and histidine 196 each contribute to the 1-deoxy-D-xylulose 5-phosphate site. Residue glutamate 149 participates in Mn(2+) binding. Glycine 202 contributes to the NADPH binding site. Residues serine 209, asparagine 214, lysine 215, and glutamate 218 each contribute to the 1-deoxy-D-xylulose 5-phosphate site. Glutamate 218 contributes to the Mn(2+) binding site.

It belongs to the DXR family. Requires Mg(2+) as cofactor. It depends on Mn(2+) as a cofactor.

The catalysed reaction is 2-C-methyl-D-erythritol 4-phosphate + NADP(+) = 1-deoxy-D-xylulose 5-phosphate + NADPH + H(+). Its pathway is isoprenoid biosynthesis; isopentenyl diphosphate biosynthesis via DXP pathway; isopentenyl diphosphate from 1-deoxy-D-xylulose 5-phosphate: step 1/6. Its function is as follows. Catalyzes the NADPH-dependent rearrangement and reduction of 1-deoxy-D-xylulose-5-phosphate (DXP) to 2-C-methyl-D-erythritol 4-phosphate (MEP). The protein is 1-deoxy-D-xylulose 5-phosphate reductoisomerase of Halalkalibacterium halodurans (strain ATCC BAA-125 / DSM 18197 / FERM 7344 / JCM 9153 / C-125) (Bacillus halodurans).